Reading from the N-terminus, the 208-residue chain is ATP synthase subunit b 1 (208 aa).

Positions 1–18 (MFVSTAFAQTATESQPAS) are enriched in polar residues. Residues 1-26 (MFVSTAFAQTATESQPASTAGEHGAA) are disordered. Residues 56–78 (SQVLWLAITFGLFYLFLSRVVLP) traverse the membrane as a helical segment.

It belongs to the ATPase B chain family. In terms of assembly, F-type ATPases have 2 components, F(1) - the catalytic core - and F(0) - the membrane proton channel. F(1) has five subunits: alpha(3), beta(3), gamma(1), delta(1), epsilon(1). F(0) has three main subunits: a(1), b(2) and c(10-14). The alpha and beta chains form an alternating ring which encloses part of the gamma chain. F(1) is attached to F(0) by a central stalk formed by the gamma and epsilon chains, while a peripheral stalk is formed by the delta and b chains.

Its subcellular location is the cell inner membrane. Its function is as follows. F(1)F(0) ATP synthase produces ATP from ADP in the presence of a proton or sodium gradient. F-type ATPases consist of two structural domains, F(1) containing the extramembraneous catalytic core and F(0) containing the membrane proton channel, linked together by a central stalk and a peripheral stalk. During catalysis, ATP synthesis in the catalytic domain of F(1) is coupled via a rotary mechanism of the central stalk subunits to proton translocation. Component of the F(0) channel, it forms part of the peripheral stalk, linking F(1) to F(0). The polypeptide is ATP synthase subunit b 1 (Brucella abortus (strain 2308)).